Consider the following 526-residue polypeptide: Tyrosine-protein kinase transforming protein Src (526 aa).

The tract at residues 1–57 (MGSSKSKPKDPSQRRCSLEPPDSTHHGGFPASQTPNKTAAPDTHRTPSRSFGTVATE) is disordered. The N-myristoyl glycine; by host moiety is linked to residue G2. The span at 7–25 (KPKDPSQRRCSLEPPDSTH) shows a compositional bias: basic and acidic residues. The region spanning 81–142 (GGVTTFVALY…PSNYVAPSDS (62 aa)) is the SH3 domain. The 98-residue stretch at 148–245 (WYFGKITRRE…GLCHRLTNVC (98 aa)) folds into the SH2 domain. The 251-residue stretch at 267–517 (LRLEVKLGQG…TFEYLQAQLL (251 aa)) folds into the Protein kinase domain. Residues 273 to 281 (LGQGCFGEV) and K295 each bind ATP. Residue D386 is the Proton acceptor of the active site. At Y416 the chain carries Phosphotyrosine; by autocatalysis.

It belongs to the protein kinase superfamily. Tyr protein kinase family. SRC subfamily. The phosphorylated form is termed pp60v-src.

It carries out the reaction L-tyrosyl-[protein] + ATP = O-phospho-L-tyrosyl-[protein] + ADP + H(+). Its function is as follows. This phosphoprotein, required for both the initiation and the maintenance of neoplastic transformation, is a protein kinase that catalyzes the phosphorylation of tyrosine residues in vitro. The polypeptide is Tyrosine-protein kinase transforming protein Src (V-SRC) (Galliformes).